Reading from the N-terminus, the 119-residue chain is Hydrogenase maturation factor HypA (119 aa).

His2 serves as a coordination point for Ni(2+). Zn(2+) contacts are provided by Cys73, Cys76, Cys89, and Cys92.

The protein belongs to the HypA/HybF family.

Involved in the maturation of [NiFe] hydrogenases. Required for nickel insertion into the metal center of the hydrogenase. The polypeptide is Hydrogenase maturation factor HypA (Dehalococcoides mccartyi (strain ATCC BAA-2266 / KCTC 15142 / 195) (Dehalococcoides ethenogenes (strain 195))).